A 162-amino-acid polypeptide reads, in one-letter code: Putative ethylene-responsive transcription factor ERF121 (162 aa).

Disordered stretches follow at residues 1–21 (MDYS…PPNL), 84–103 (IKQE…KWSA), and 139–162 (KRSA…GGDD). Over residues 87-98 (EKKHKGVRKKPS) the composition is skewed to basic residues. Positions 89–146 (KHKGVRKKPSGKWSAEIWDPSTRTRRWLGTFPTAEMAADAYDEAAAALVEKRSARRGS) form a DNA-binding region, AP2/ERF.

This sequence belongs to the AP2/ERF transcription factor family. ERF subfamily.

The protein resides in the nucleus. Its function is as follows. Probably acts as a transcriptional activator. Binds to the GCC-box pathogenesis-related promoter element. May be involved in the regulation of gene expression by stress factors and by components of stress signal transduction pathways. This is Putative ethylene-responsive transcription factor ERF121 (ERF121) from Arabidopsis thaliana (Mouse-ear cress).